The primary structure comprises 55 residues: Ferredoxin (55 aa).

4Fe-4S ferredoxin-type domains lie at 2–27 (HIIT…HEGT) and 28–55 (GKYE…VKAE). [4Fe-4S] cluster-binding residues include Cys-8, Cys-11, Cys-14, Cys-18, Cys-37, Cys-40, Cys-43, and Cys-47.

The cofactor is [4Fe-4S] cluster.

Its function is as follows. Ferredoxins are iron-sulfur proteins that transfer electrons in a wide variety of metabolic reactions. The sequence is that of Ferredoxin from Thermoanaerobacterium thermosaccharolyticum (Clostridium thermosaccharolyticum).